The primary structure comprises 167 residues: Anaerobic nitrite reductase NSHB4 (167 aa).

Residues 12–162 (RFTEEQEALV…LVAAIKEGMK (151 aa)) enclose the Globin domain. Positions 45–49 (EVAPS) match the Homodimerization motif. 5 residues coordinate heme b: S55, H73, R103, T107, and H108. The short motif at 115 to 127 (DTHFEVARFALLE) is the Homodimerization element.

Belongs to the plant globin family. Homodimer. Heme b serves as cofactor.

It is found in the cytoplasm. It localises to the nucleus. It catalyses the reaction Fe(III)-heme b-[protein] + nitric oxide + H2O = Fe(II)-heme b-[protein] + nitrite + 2 H(+). Its function is as follows. Phytoglobin that reduces nitrite to nitric oxide under anoxic conditions (e.g. during flooding or in waterlogged soil). May not function as an oxygen storage or transport protein. Has an unusually high affinity for O(2) through an hexacoordinate heme iron because of a very low dissociation constant. The sequence is that of Anaerobic nitrite reductase NSHB4 from Oryza sativa subsp. indica (Rice).